A 237-amino-acid polypeptide reads, in one-letter code: Fibroblast growth factor 3 (237 aa).

Residues 1–21 (MVIIWILLLSFISCGPQVSWA) form the signal peptide. Asn83 is a glycosylation site (N-linked (GlcNAc...) asparagine).

It belongs to the heparin-binding growth factors family.

Its function is as follows. Plays an important role in the regulation of embryonic development, cell proliferation, and cell differentiation. The sequence is that of Fibroblast growth factor 3 (fgf3) from Xenopus laevis (African clawed frog).